A 200-amino-acid polypeptide reads, in one-letter code: Probable nicotinate-nucleotide adenylyltransferase (200 aa).

It belongs to the NadD family.

It catalyses the reaction nicotinate beta-D-ribonucleotide + ATP + H(+) = deamido-NAD(+) + diphosphate. It participates in cofactor biosynthesis; NAD(+) biosynthesis; deamido-NAD(+) from nicotinate D-ribonucleotide: step 1/1. Functionally, catalyzes the reversible adenylation of nicotinate mononucleotide (NaMN) to nicotinic acid adenine dinucleotide (NaAD). This chain is Probable nicotinate-nucleotide adenylyltransferase, found in Clavibacter sepedonicus (Clavibacter michiganensis subsp. sepedonicus).